A 318-amino-acid chain; its full sequence is RNA polymerase II transcription factor B subunit 3 (318 aa).

An RING-type zinc finger spans residues 13-54; the sequence is CPLCQADRYLNPNMKLLINPECYHKMCESCVDRIFTTGPAQC.

One of the nine subunits forming the core-TFIIH basal transcription factor. Also interacts with skp1 and with the mcs2-mcs6 complex.

The protein resides in the cytoplasm. Its subcellular location is the nucleus. In terms of biological role, acts as a component of the general transcription and DNA repair factor IIH (TFIIH or factor B), which is essential for both basal and activated transcription, and is involved in nucleotide excision repair (NER) of damaged DNA. TFIIH has CTD kinase activity and DNA-dependent ATPase activity, and is essential for polymerase II transcription. This chain is RNA polymerase II transcription factor B subunit 3 (pmh1), found in Schizosaccharomyces pombe (strain 972 / ATCC 24843) (Fission yeast).